The chain runs to 303 residues: Probable 5-dehydro-4-deoxyglucarate dehydratase (303 aa).

The protein belongs to the DapA family.

The enzyme catalyses 5-dehydro-4-deoxy-D-glucarate + H(+) = 2,5-dioxopentanoate + CO2 + H2O. It functions in the pathway carbohydrate acid metabolism; D-glucarate degradation; 2,5-dioxopentanoate from D-glucarate: step 2/2. This Pseudomonas savastanoi pv. phaseolicola (strain 1448A / Race 6) (Pseudomonas syringae pv. phaseolicola (strain 1448A / Race 6)) protein is Probable 5-dehydro-4-deoxyglucarate dehydratase.